A 411-amino-acid chain; its full sequence is Serpin A3-3 (411 aa).

The signal sequence occupies residues Met1–Cys24. Asn100, Asn180, Asn230, Asn264, and Asn318 each carry an N-linked (GlcNAc...) asparagine glycan.

Belongs to the serpin family. In terms of assembly, homodimer.

It is found in the cytoplasmic vesicle. The protein resides in the secretory vesicle. It localises to the chromaffin granule. Its subcellular location is the secreted. Its function is as follows. Serine protease inhibitor. Strongly inhibits elastase and trypsin stoichiometrically at the molar ratio of 1:1. Acts as a moderate inhibitor of plasmin and chymotrypsin. Does not inhibit thrombin, urokinase, kallikrein, tissue plasminogen activator, cathepsin G or the cysteine proteases papain, cathepsin B or cathepsin L. The chain is Serpin A3-3 (SERPINA3-3) from Bos taurus (Bovine).